The chain runs to 961 residues: Thrombospondin-4 (961 aa).

An N-terminal signal peptide occupies residues 1–23 (MLAPRGATFLLLHLALQPWLGAG). The 169-residue stretch at 24-192 (AQATPQVFDL…LEELKLVVRG (169 aa)) folds into the Laminin G-like domain. The 40-residue stretch at 286–325 (PVRRCDSNPCFRGVRCTDTRDGFQCGPCPEGYTGNGIVCS) folds into the EGF-like 1 domain. 21 cysteine pairs are disulfide-bonded: Cys290–Cys301, Cys295–Cys310, Cys313–Cys324, Cys330–Cys341, Cys335–Cys350, Cys353–Cys377, Cys383–Cys394, Cys388–Cys403, Cys406–Cys418, Cys424–Cys438, Cys432–Cys448, Cys450–Cys461, Cys477–Cys482, Cys487–Cys507, Cys523–Cys543, Cys546–Cys566, Cys582–Cys602, Cys605–Cys625, Cys643–Cys663, Cys683–Cys703, and Cys719–Cys940. The EGF-like 2; calcium-binding domain maps to 326 to 363 (DVDECRYHPCYPGVRCVNLAPGFRCDACPVGFTGPMMQ). One can recognise an EGF-like 3; calcium-binding domain in the interval 379–419 (DIDECRNGACVLNSICINTLGSYRCGPCKPGYIGDQMRGCK). The EGF-like 4 domain occupies 420–462 (MERNCRDPELNPCSVNAQCIEERQGDVTCVCGVGWAGDGYICG). TSP type-3 repeat units follow at residues 463-495 (KDVD…NSGQ), 496-531 (EDAD…NVDQ), 532-554 (RNSD…NNDQ), 555-590 (KDTD…NSDQ), 591-613 (EDRD…NPNQ), 614-651 (SDVD…NSAQ), 652-691 (LDTD…NPAQ), and 692-727 (EDSN…EVTL). Positions 562-564 (KGD) match the Cell attachment site motif. The segment at 581–671 (NCQKVPNSDQ…ECDDDDDNDG (91 aa)) is disordered. N-linked (GlcNAc...) asparagine glycosylation is present at Asn612. Residues 640-652 (TDNCPTVINSAQL) are compositionally biased toward polar residues. Over residues 660–671 (GDECDDDDDNDG) the composition is skewed to acidic residues. The 215-residue stretch at 731 to 945 (RAYQTVVLDP…LKYRCNDTIP (215 aa)) folds into the TSP C-terminal domain. Residue Asn941 is glycosylated (N-linked (GlcNAc...) asparagine).

This sequence belongs to the thrombospondin family. Homopentamer; disulfide-linked. Interacts with PTBP3. Interacts (via EGF-like 3; calcium-binding domain) with ATF6 and facilitates its processing, activation and nuclear translocation. Interacts with NOTCH1.

It is found in the endoplasmic reticulum. The protein resides in the sarcoplasmic reticulum. Its subcellular location is the secreted. It localises to the extracellular space. The protein localises to the extracellular matrix. Its function is as follows. Adhesive glycoprotein that mediates cell-to-cell and cell-to-matrix interactions and is involved in various processes including cellular proliferation, migration, adhesion and attachment, inflammatory response to CNS injury, regulation of vascular inflammation and adaptive responses of the heart to pressure overload and in myocardial function and remodeling. Binds to structural extracellular matrix (ECM) proteins and modulates the ECM in response to tissue damage, contributing to cardioprotective and adaptive ECM remodeling. Plays a role in ER stress response, via its interaction with the activating transcription factor 6 alpha (ATF6) which produces adaptive ER stress response factors and protects myocardium from pressure overload. May contribute to spinal presynaptic hypersensitivity and neuropathic pain states after peripheral nerve injury. May play a role in regulating protective astrogenesis from the subventricular zone (SVZ) niche after injury in a NOTCH1-dependent manner. The chain is Thrombospondin-4 (THBS4) from Bos taurus (Bovine).